A 517-amino-acid polypeptide reads, in one-letter code: Rop guanine nucleotide exchange factor 9 (517 aa).

Disordered stretches follow at residues 16-76 (NLDR…SETE) and 428-517 (GEET…KDRH). The segment covering 39 to 63 (MPESQTQDSLGGSPVETSRPMTSRL) has biased composition (polar residues). The PRONE domain maps to 65 to 429 (SRRQDKQQSE…SLARKQCTGE (365 aa)). A compositionally biased stretch (basic and acidic residues) spans 66 to 76 (RRQDKQQSETE). The segment covering 440–452 (ETDSASAGSSNYS) has biased composition (polar residues).

Interacts with ARAC11/ROP1 and ARAC10/ROP11. Interacts with PRK6. Expressed in pollen grains and pollen tubes.

Its subcellular location is the cell membrane. Functionally, guanine-nucleotide exchange factor (GEF) that acts as an activator of Rop (Rho of plants) GTPases by promoting the exchange of GDP for GTP. This Arabidopsis thaliana (Mouse-ear cress) protein is Rop guanine nucleotide exchange factor 9.